A 154-amino-acid chain; its full sequence is Mitochondrial fission 1 protein (154 aa).

Over Met1–Gly124 the chain is Cytoplasmic. The chain crosses the membrane as a helical span at residues Met125–Met145. The Mitochondrial intermembrane portion of the chain corresponds to Ala146–Lys154.

The protein belongs to the FIS1 family.

Its subcellular location is the mitochondrion outer membrane. Involved in the fragmentation of the mitochondrial network and its perinuclear clustering. Functions downstream of Pink1 and upstream of Drp1 to regulate mitochondrial fission. This is Mitochondrial fission 1 protein from Drosophila melanogaster (Fruit fly).